The sequence spans 956 residues: Outer capsid protein VP2 (956 aa).

This sequence belongs to the orbivirus VP2 family.

The protein resides in the virion. The VP2 protein is one of the two proteins (with VP5) which constitute the virus particle outer capsid. It is the major target of the host immunogenic response. Responsible for viral attachment to target host cell, probably by binding to sialic acid. This attachment induces virion internalization predominantly through clathrin-dependent endocytosis. In Bluetongue virus 10 (isolate USA) (BTV 10), this protein is Outer capsid protein VP2 (Segment-2).